Consider the following 261-residue polypeptide: Glucosamine-6-phosphate deaminase (261 aa).

Asp67 (proton acceptor; for enolization step) is an active-site residue. Catalysis depends on Asp136, which acts as the For ring-opening step. Catalysis depends on His138, which acts as the Proton acceptor; for ring-opening step. Catalysis depends on Glu143, which acts as the For ring-opening step.

Belongs to the glucosamine/galactosamine-6-phosphate isomerase family. NagB subfamily.

It catalyses the reaction alpha-D-glucosamine 6-phosphate + H2O = beta-D-fructose 6-phosphate + NH4(+). It participates in amino-sugar metabolism; N-acetylneuraminate degradation; D-fructose 6-phosphate from N-acetylneuraminate: step 5/5. Functionally, catalyzes the reversible isomerization-deamination of glucosamine 6-phosphate (GlcN6P) to form fructose 6-phosphate (Fru6P) and ammonium ion. In Streptomyces avermitilis (strain ATCC 31267 / DSM 46492 / JCM 5070 / NBRC 14893 / NCIMB 12804 / NRRL 8165 / MA-4680), this protein is Glucosamine-6-phosphate deaminase.